The sequence spans 64 residues: MARVCQITGKGPMVGNNVSHANNKTKRRFLPNLRTVRVTLEDGTTRKMRIAASTLRTLKKQNSK.

It belongs to the bacterial ribosomal protein bL28 family.

This chain is Large ribosomal subunit protein bL28, found in Campylobacter jejuni subsp. jejuni serotype O:6 (strain 81116 / NCTC 11828).